The following is a 432-amino-acid chain: uncharacterized protein (432 aa).

Lys-243 carries the post-translational modification N6-(pyridoxal phosphate)lysine.

This sequence belongs to the class-II pyridoxal-phosphate-dependent aminotransferase family. The cofactor is pyridoxal 5'-phosphate.

It is found in the cytoplasm. This is an uncharacterized protein from Methanocaldococcus jannaschii (strain ATCC 43067 / DSM 2661 / JAL-1 / JCM 10045 / NBRC 100440) (Methanococcus jannaschii).